A 121-amino-acid polypeptide reads, in one-letter code: Large ribosomal subunit protein bL12 (121 aa).

The protein belongs to the bacterial ribosomal protein bL12 family. In terms of assembly, homodimer. Part of the ribosomal stalk of the 50S ribosomal subunit. Forms a multimeric L10(L12)X complex, where L10 forms an elongated spine to which 2 to 4 L12 dimers bind in a sequential fashion. Binds GTP-bound translation factors.

Functionally, forms part of the ribosomal stalk which helps the ribosome interact with GTP-bound translation factors. Is thus essential for accurate translation. In Baumannia cicadellinicola subsp. Homalodisca coagulata, this protein is Large ribosomal subunit protein bL12.